We begin with the raw amino-acid sequence, 63 residues long: Conotoxin Pu5.4 (63 aa).

The N-terminal stretch at 1 to 22 is a signal peptide; the sequence is MRCVPVFVILLLLIASTPSVDA. Residues 23–50 constitute a propeptide that is removed on maturation; the sequence is TQKTKDDMSLASFHDNAKRFLQTLRNTR. Trp-62 carries the tryptophan amide modification.

Belongs to the conotoxin T superfamily. In terms of processing, contains 2 disulfide bonds that can be either 'C1-C3, C2-C4' or 'C1-C4, C2-C3', since these disulfide connectivities have been observed for conotoxins with cysteine framework V (for examples, see AC P0DQQ7 and AC P81755). In terms of tissue distribution, expressed by the venom duct.

Its subcellular location is the secreted. This Conus pulicarius (Flea-bitten cone) protein is Conotoxin Pu5.4.